Reading from the N-terminus, the 154-residue chain is 6,7-dimethyl-8-ribityllumazine synthase (154 aa).

Residues phenylalanine 22, 56–58, and 80–82 each bind 5-amino-6-(D-ribitylamino)uracil; these read AFE and AVI. 85-86 is a binding site for (2S)-2-hydroxy-3-oxobutyl phosphate; sequence AT. Catalysis depends on histidine 88, which acts as the Proton donor. Phenylalanine 113 contacts 5-amino-6-(D-ribitylamino)uracil. Arginine 127 is a binding site for (2S)-2-hydroxy-3-oxobutyl phosphate.

It belongs to the DMRL synthase family.

The catalysed reaction is (2S)-2-hydroxy-3-oxobutyl phosphate + 5-amino-6-(D-ribitylamino)uracil = 6,7-dimethyl-8-(1-D-ribityl)lumazine + phosphate + 2 H2O + H(+). It participates in cofactor biosynthesis; riboflavin biosynthesis; riboflavin from 2-hydroxy-3-oxobutyl phosphate and 5-amino-6-(D-ribitylamino)uracil: step 1/2. In terms of biological role, catalyzes the formation of 6,7-dimethyl-8-ribityllumazine by condensation of 5-amino-6-(D-ribitylamino)uracil with 3,4-dihydroxy-2-butanone 4-phosphate. This is the penultimate step in the biosynthesis of riboflavin. The chain is 6,7-dimethyl-8-ribityllumazine synthase from Syntrophobacter fumaroxidans (strain DSM 10017 / MPOB).